The chain runs to 355 residues: Probable aldo-keto reductase 3 (355 aa).

The active-site Proton donor is the Tyr-70. His-138 provides a ligand contact to substrate. 217 to 227 is a binding site for NADP(+); the sequence is SPLGRGFFSSG.

This sequence belongs to the aldo/keto reductase family.

The chain is Probable aldo-keto reductase 3 from Oryza sativa subsp. indica (Rice).